Reading from the N-terminus, the 120-residue chain is Large ribosomal subunit protein bL19 (120 aa).

It belongs to the bacterial ribosomal protein bL19 family.

This protein is located at the 30S-50S ribosomal subunit interface and may play a role in the structure and function of the aminoacyl-tRNA binding site. In Thermodesulfovibrio yellowstonii (strain ATCC 51303 / DSM 11347 / YP87), this protein is Large ribosomal subunit protein bL19.